The following is a 120-amino-acid chain: Chaperonin GroEL (120 aa).

Position 23-27 (aspartate 23–threonine 27) interacts with ATP.

It belongs to the chaperonin (HSP60) family. As to quaternary structure, forms a cylinder of 14 subunits composed of two heptameric rings stacked back-to-back. Interacts with the co-chaperonin GroES.

The protein localises to the cytoplasm. The enzyme catalyses ATP + H2O + a folded polypeptide = ADP + phosphate + an unfolded polypeptide.. Together with its co-chaperonin GroES, plays an essential role in assisting protein folding. The GroEL-GroES system forms a nano-cage that allows encapsulation of the non-native substrate proteins and provides a physical environment optimized to promote and accelerate protein folding. The polypeptide is Chaperonin GroEL (Mycobacterium intracellulare).